A 444-amino-acid polypeptide reads, in one-letter code: tRNA-2-methylthio-N(6)-dimethylallyladenosine synthase (444 aa).

In terms of domain architecture, MTTase N-terminal spans 4–120; the sequence is PTYYTITFGC…LGDLLAQVEA (117 aa). Residues cysteine 13, cysteine 49, cysteine 83, cysteine 155, cysteine 159, and cysteine 162 each coordinate [4Fe-4S] cluster. The Radical SAM core domain maps to 141–372; sequence RDSQVTAWIN…RLVAEVAAAR (232 aa). One can recognise a TRAM domain in the interval 374-438; it reads ARLLGQVQEV…AFSLTGEAVT (65 aa).

It belongs to the methylthiotransferase family. MiaB subfamily. As to quaternary structure, monomer. The cofactor is [4Fe-4S] cluster.

It localises to the cytoplasm. It catalyses the reaction N(6)-dimethylallyladenosine(37) in tRNA + (sulfur carrier)-SH + AH2 + 2 S-adenosyl-L-methionine = 2-methylsulfanyl-N(6)-dimethylallyladenosine(37) in tRNA + (sulfur carrier)-H + 5'-deoxyadenosine + L-methionine + A + S-adenosyl-L-homocysteine + 2 H(+). Its function is as follows. Catalyzes the methylthiolation of N6-(dimethylallyl)adenosine (i(6)A), leading to the formation of 2-methylthio-N6-(dimethylallyl)adenosine (ms(2)i(6)A) at position 37 in tRNAs that read codons beginning with uridine. This Synechococcus sp. (strain JA-2-3B'a(2-13)) (Cyanobacteria bacterium Yellowstone B-Prime) protein is tRNA-2-methylthio-N(6)-dimethylallyladenosine synthase.